The chain runs to 279 residues: DegV domain-containing protein M6_Spy1246 (279 aa).

The region spanning 4 to 278 is the DegV domain; sequence IKIVTDSSIT…EGAFAVMVRY (275 aa). 2 residues coordinate hexadecanoate: Thr62 and Ser95.

In terms of biological role, may bind long-chain fatty acids, such as palmitate, and may play a role in lipid transport or fatty acid metabolism. The chain is DegV domain-containing protein M6_Spy1246 from Streptococcus pyogenes serotype M6 (strain ATCC BAA-946 / MGAS10394).